A 504-amino-acid polypeptide reads, in one-letter code: MAQIDFRNKINWHRRYRSPQGVKTEHEILRIFESDRGRIINSPAIRRLQQKTQVFPLERNAAVRTRLTHSMEVQQVGRYIAKEILSRLKELKLLEQYGLDELTGPFESIVEMSCLMHDIGNPPFGHFGEAAINDWFRQRLHPADAESQPLSDDRCAVAALRLREGEESLNDIRRKVRQDLCHFEGNAQGIRLVHTLMRMNLTWAQVGGILKYTRPAWWRGETPATHRYLMKKPGYYLSEAPYIERLRKELALAPYSRFPLTWIMEAADDISYCVADLEDAVEKRIFSVEQLYHHLYEAWGHHEKGSLFTQVVENAWEKSRSNSLSRSTEDQFFMYLRVNTLNKLVPYAAQRFIDNLPQIFDGSFNHALLEDASSFSQLLELYKNVAIKHVFSHPDVEQLELQGYRVISGLLEIYQPLLRMSLVDFRELVEKERVKRFPIESRLFQKLSTRHRLAYVEAVSKLSPEAPEYPTLEYYYRCRLIQDYISGMTDLYAWDEYRRLMAVE.

The HD domain occupies 66 to 273 (RLTHSMEVQQ…MEAADDISYC (208 aa)).

It belongs to the dGTPase family. Type 1 subfamily. In terms of assembly, homotetramer. It depends on Mg(2+) as a cofactor.

It catalyses the reaction dGTP + H2O = 2'-deoxyguanosine + triphosphate + H(+). Functionally, dGTPase preferentially hydrolyzes dGTP over the other canonical NTPs. The chain is Deoxyguanosinetriphosphate triphosphohydrolase from Citrobacter koseri (strain ATCC BAA-895 / CDC 4225-83 / SGSC4696).